The sequence spans 899 residues: Solute carrier family 12 member 9 (899 aa).

The Cytoplasmic portion of the chain corresponds to 1-44 (MTSESSPLLHYRLFSVSDGGLGPPDSSPIMTDAVTVGTGPTQRK). A helical transmembrane segment spans residues 45 to 65 (LSTFFGVVVPTVLSMFSIVVF). Over 66-80 (MRIGFVVGHAGLLQS) the chain is Extracellular. Residues 81 to 101 (LLMLFVAYVIIWLTVLSVCAI) traverse the membrane as a helical segment. Residues 102 to 127 (STNGAVQGGGAYFMISRTLGPEFGGS) are Cytoplasmic-facing. Residues 128–148 (IGLMFYLANVFACGVYVLGLV) form a helical membrane-spanning segment. At 149–176 (EAVLDVFGRDPSDVTDSLRSLPQGYGYS) the chain is on the extracellular side. A helical transmembrane segment spans residues 177-197 (FLYASIILLLCMAICLVGASI). At 198–202 (YSQAS) the chain is on the cytoplasmic side. The chain crosses the membrane as a helical span at residues 203–223 (FFIFLLVFVVLLTILISFLAV). The Extracellular segment spans residues 224–266 (RPLTVSIRHGGNVTMTGVYTGINSSTLHNNLQADYSLDYTTGN). Residues N235 and N246 are each glycosylated (N-linked (GlcNAc...) asparagine). Residues 267 to 287 (LMNFATVFAVMFNGCTGIMAG) form a helical membrane-spanning segment. The Cytoplasmic portion of the chain corresponds to 288–304 (CNLSGELKQPSRSIPMG). Residues 305 to 325 (TIIAVIITFFVYLILFIFTAF) traverse the membrane as a helical segment. At 326-347 (TCDRTLLREDYGFFRSINIWPP) the chain is on the extracellular side. The chain crosses the membrane as a helical span at residues 348–368 (FVLIGVYATSLSASMSTLIGA). Residues 369-393 (SRILHALAKDDLFGVLLAPAKLVSK) are Cytoplasmic-facing. The chain crosses the membrane as a helical span at residues 394–414 (GGNPWGAVVYTWALVQLVLLA). Residues 415 to 419 (GKLNT) are Extracellular-facing. The helical transmembrane segment at 420–440 (IAGIVTVFYLIAYAAIDLACL) threads the bilayer. Over 441-469 (ALEWASAPNFRPTFRFFSWHTCLLGILSS) the chain is Cytoplasmic. Residues 470–490 (LVMMFLINPAYASGSIVLLLL) form a helical membrane-spanning segment. Residues 491-739 (LLGSIHFRSS…PLDLLRPQAS (249 aa)) lie on the Extracellular side of the membrane. Residues 740-760 (AYVDVCSLFLLQMACILNMAA) form a helical membrane-spanning segment. Topologically, residues 761 to 899 (SWRRYQLRVF…GLTPVTCTEL (139 aa)) are cytoplasmic.

Belongs to the SLC12A transporter family.

It is found in the cell membrane. It localises to the lysosome membrane. In terms of biological role, seems to correspond to a subunit of a multimeric transport system and thus, additional subunits may be required for its function. May play a role in lysosomal ion flux and osmoregulation. This chain is Solute carrier family 12 member 9 (slc12a9), found in Xenopus laevis (African clawed frog).